We begin with the raw amino-acid sequence, 671 residues long: Copper amine oxidase 1 (671 aa).

The N2 stretch occupies residues Pro-3 to His-106. The segment at Ala-107–Glu-211 is N3. Substrate is bound at residue Ala-319–Met-330. Residue Asp-321 is the Proton acceptor of the active site. Cys-340 and Cys-366 are oxidised to a cystine. Leu-402–Tyr-407 serves as a coordination point for substrate. The active-site Schiff-base intermediate with substrate; via topaquinone is the Tyr-405. Residue Tyr-405 is modified to 2',4',5'-topaquinone. 2 residues coordinate Cu cation: His-455 and His-457. Asp-464 lines the Mn(2+) pocket. N-linked (GlcNAc...) asparagine glycosylation occurs at Asn-471. Asp-606 contributes to the Mn(2+) binding site. A Cu cation-binding site is contributed by His-617.

It belongs to the copper/topaquinone oxidase family. As to quaternary structure, homodimer. It depends on Cu cation as a cofactor. Zn(2+) serves as cofactor. L-topaquinone is required as a cofactor. Requires Mn(2+) as cofactor. In terms of processing, topaquinone (TPQ) is generated by copper-dependent autoxidation of a specific tyrosyl residue.

It carries out the reaction histamine + O2 + H2O = imidazole-4-acetaldehyde + H2O2 + NH4(+). In Aspergillus niger, this protein is Copper amine oxidase 1 (AO-I).